Here is a 131-residue protein sequence, read N- to C-terminus: Cruxhalorhodopsin-1 (131 aa).

Residues Pro-1–Ala-11 traverse the membrane as a helical segment. Residues Asp-12–Asp-14 are Cytoplasmic-facing. A helical membrane pass occupies residues Ile-15 to Ile-38. The Extracellular segment spans residues Thr-39–Ser-41. The helical transmembrane segment at His-42–Leu-64 threads the bilayer. The Cytoplasmic segment spans residues Val-65–Thr-76. A helical membrane pass occupies residues Ser-77–Leu-100. The Extracellular segment spans residues Gly-101–Ser-109. The helical transmembrane segment at Val-110–Ile-131 threads the bilayer. Lys-125 bears the N6-(retinylidene)lysine mark.

Belongs to the archaeal/bacterial/fungal opsin family.

The protein resides in the cell membrane. Light-driven chloride pump. The chain is Cruxhalorhodopsin-1 (choP1) from Haloarcula argentinensis.